Here is a 309-residue protein sequence, read N- to C-terminus: MSKELVFGHQNPDTDAIVAAKAFSYYENKMGADTEAVALGEPNEETQFVLDYFDEPALRVITKASDEVDSVMLVDHNEPQQSVSDIADVTVSHVVDHHRIAGFDTAQPLFYRAEPLGCCSTVIYKLFKENDIEIPAKLAGLMLSAIISDTLLLKSPTTTETDVAVVKDLAKIADIDYETYGLAMLKAGTNLDSKTEKELIDADAKSFEMAGKTVRVAQINTVDLDDVFKRQAALEAAAKDENASDGYDLFLILATNILDSNSELLVVGNPTEPVEKAFGKTIANNRLSLPGVVSRKKQVVPQLTDAFNA.

H9, D13, D15, D75, H97, and D149 together coordinate Mn(2+).

The protein belongs to the PPase class C family. Mn(2+) is required as a cofactor.

It localises to the cytoplasm. It carries out the reaction diphosphate + H2O = 2 phosphate + H(+). The polypeptide is Probable manganese-dependent inorganic pyrophosphatase (Lactiplantibacillus plantarum (strain ATCC BAA-793 / NCIMB 8826 / WCFS1) (Lactobacillus plantarum)).